Reading from the N-terminus, the 453-residue chain is uncharacterized protein (453 aa).

The TRAM domain occupies 5–63; the sequence is LLKKNQSVELTIEDLTHDGSGVGKIDGYPLFIPNALPGEKITAKITKLNKNYGFARMEN. [4Fe-4S] cluster contacts are provided by C76, C82, C85, and C162. Residues Q285, Y314, E335, and D383 each coordinate S-adenosyl-L-methionine. C410 serves as the catalytic Nucleophile.

Belongs to the class I-like SAM-binding methyltransferase superfamily. RNA M5U methyltransferase family.

This is an uncharacterized protein from Listeria innocua serovar 6a (strain ATCC BAA-680 / CLIP 11262).